The following is a 1005-amino-acid chain: MGSAEDAVKEKLLWNVKKEVKQIMEEAVTRKFVHEDSSHIIALCGAVEACLLHQLRRRAAGFLRSDKMAALFTKVGKTCPVAEDICHKVQELQQQAEGRKPSGGSQEALRKQGSTGGKAPALSPQALKHIWVRTALMEKVLDRVVQYLAENCSKYYEKEALLADPVFGPILACLLVGPCALEYTKLKTADHYWTDPSADELVQRHRIRGPPNRQDSPAKRPALGIRKRHSSGSASEDRLAACAREYVESLHQNSRTRLLYGKNNVLVQPKEDMEAVPGYLSLHQSAENLTLKWTPNQLMNGTLGDSELEKSVYWDYALVVPFSQIVCIHCHQQKSGGTLVLVSQDGIQRPPLHFPQGGHLLSFLSCLENGLLPRGQLEPPLWTQQGKGKVFPKLRKRSSIRSIDVEELGVGRATDYVFRIIYPGHRHEHNAGDMIEMQGFGPSLTAWHLEPLCSQGSSCLSCSSSSSPYATPSHCSCIPDRLPLRLLCESMKRQIVSRAFYGWLAYCRHLSTVRTHLSALVHHNIIPPDRPPGASGGLTKDVWSKYQKDEKNYKELELLRQVYYGGVEHEIRKDVWPFLLGHYKFGMSKKEMEQVDTAVAARYQQVLAEWKACEVVVRQREREAHPATLTKFSSGSSIDSHVQRLVHRDSTISNDVFISVDDLEPSGPQDLEDSKPKREQEPGAGTPGIAAAEQQSVEFDSPDSGLPSSRNYSVASGIQSSLDEAQSVGFEDDGAGEDGSEGPATAAHTFPGPHDPGQETLAPASELEAGQELAAVCAAAYTIELLDTVALNLHRIDKDVQRCDRNYWYFTTSNLERLRDIMCSYVWEHLDMGYVQGMCDLLAPLLVILDNDQLAYSCFSHLMKRMGQNFPSGGAMDSHFANMRSLIQILDSELFELMHQNGDYTHFYFCYRWFLLDFKRELLYEDVFAVWEVIWAARRISSEHFVLFIALALVEAYREIIRDNNMDFTDIIKFFNERAERHDAQEILRIARDLVHKVQMLIDNK.

Residues 34 to 191 (HEDSSHIIAL…EYTKLKTADH (158 aa)) form the RUN domain. Disordered regions lie at residues 95–121 (QAEG…KAPA) and 205–236 (HRIR…SASE). 2 positions are modified to phosphoserine: Ser402 and Leu444. One can recognise a Rab-GAP TBC domain in the interval 566–938 (GVEHEIRKDV…AVWEVIWAAR (373 aa)). Disordered stretches follow at residues 657 to 687 (FISV…AGTP) and 729 to 761 (GFED…QETL). The span at 672–681 (EDSKPKREQE) shows a compositional bias: basic and acidic residues. Residues 730–740 (FEDDGAGEDGS) are compositionally biased toward acidic residues.

The protein belongs to the RUTBC family. As to quaternary structure, interacts with RAB4A, RAB11A, RAP1A, RAP1B, RAP2A and RAP2B. No interaction with RAB27A. Interacts with RAB9A. As to expression, widely expressed.

The protein resides in the cytoplasm. The protein localises to the melanosome. Possesses GTPase activator activity towards RAB32, RAB33B and RAB38. Regulates the trafficking of melanogenic enzymes TYR, TYRP1 and DCT/TYRP2 to melanosomes in melanocytes by inactivating RAB32 and RAB38. Inhibits RAB32 and RAB38 activation both directly by promoting their GTPase activity and indirectly by disrupting the RAB9A-HPS4 interaction which is required for RAB32/38 activation. This is Small G protein signaling modulator 2 (Sgsm2) from Mus musculus (Mouse).